The chain runs to 208 residues: Probable GTP-binding protein EngB (208 aa).

The EngB-type G domain occupies 23–205 (LTSEMVILGR…RQTLLKYLLT (183 aa)). Residues 31–38 (GRSNVGKS), 57–61 (GKTRL), 84–87 (DLPG), 154–157 (TKFD), and 182–184 (FNA) each bind GTP. Mg(2+)-binding residues include Ser38 and Thr59.

This sequence belongs to the TRAFAC class TrmE-Era-EngA-EngB-Septin-like GTPase superfamily. EngB GTPase family. The cofactor is Mg(2+).

Its function is as follows. Necessary for normal cell division and for the maintenance of normal septation. The chain is Probable GTP-binding protein EngB from Helicobacter pylori (strain Shi470).